The chain runs to 92 residues: SPbeta prophage-derived DNA-binding protein HU 2 (92 aa).

At threonine 4 the chain carries Phosphothreonine. Positions 55–77 (RAARKGRNPQTGEEIDIPATKAP) are disordered.

The protein belongs to the bacterial histone-like protein family. In terms of assembly, homodimer.

Its function is as follows. Histone-like DNA-binding protein which is capable of wrapping DNA to stabilize it, and thus to prevent its denaturation under extreme environmental conditions. This is SPbeta prophage-derived DNA-binding protein HU 2 (hup2) from Bacillus subtilis (strain 168).